We begin with the raw amino-acid sequence, 423 residues long: NDP-N-acetyl-D-galactosaminuronic acid dehydrogenase (423 aa).

NAD(+) is bound at residue 11–28 (TISVVGLGYIGLPTATVL). Residue Lys218 is the Proton donor/acceptor of the active site. The Nucleophile role is filled by Cys272.

Belongs to the UDP-glucose/GDP-mannose dehydrogenase family.

Probably involved in synthesis of sugar components of EPS I, by converting NDP-N-acetyl-D-galactosamine into NDP-N-acetyl-D-galactosaminuronic acid. The protein is NDP-N-acetyl-D-galactosaminuronic acid dehydrogenase (epsD) of Ralstonia solanacearum (Pseudomonas solanacearum).